The following is a 370-amino-acid chain: DNA replication and repair protein RecF (370 aa).

30 to 37 (GENAQGKT) serves as a coordination point for ATP.

Belongs to the RecF family.

The protein resides in the cytoplasm. Functionally, the RecF protein is involved in DNA metabolism; it is required for DNA replication and normal SOS inducibility. RecF binds preferentially to single-stranded, linear DNA. It also seems to bind ATP. In Listeria welshimeri serovar 6b (strain ATCC 35897 / DSM 20650 / CCUG 15529 / CIP 8149 / NCTC 11857 / SLCC 5334 / V8), this protein is DNA replication and repair protein RecF.